The sequence spans 500 residues: L-arabinose isomerase (500 aa).

Residues glutamate 306, glutamate 333, histidine 349, and histidine 448 each contribute to the Mn(2+) site.

This sequence belongs to the arabinose isomerase family. It depends on Mn(2+) as a cofactor.

It catalyses the reaction beta-L-arabinopyranose = L-ribulose. It participates in carbohydrate degradation; L-arabinose degradation via L-ribulose; D-xylulose 5-phosphate from L-arabinose (bacterial route): step 1/3. Its function is as follows. Catalyzes the conversion of L-arabinose to L-ribulose. This Shewanella sp. (strain MR-7) protein is L-arabinose isomerase.